The chain runs to 228 residues: Ribosomal RNA small subunit methyltransferase G (228 aa).

Residues glycine 89, leucine 94, valine 140–glutamate 141, and arginine 159 contribute to the S-adenosyl-L-methionine site.

This sequence belongs to the methyltransferase superfamily. RNA methyltransferase RsmG family.

Its subcellular location is the cytoplasm. It catalyses the reaction guanosine(527) in 16S rRNA + S-adenosyl-L-methionine = N(7)-methylguanosine(527) in 16S rRNA + S-adenosyl-L-homocysteine. Specifically methylates the N7 position of guanine in position 527 of 16S rRNA. The chain is Ribosomal RNA small subunit methyltransferase G from Burkholderia cenocepacia (strain ATCC BAA-245 / DSM 16553 / LMG 16656 / NCTC 13227 / J2315 / CF5610) (Burkholderia cepacia (strain J2315)).